The sequence spans 241 residues: Pyridoxal phosphate phosphatase PHOSPHO2 (241 aa).

The active-site Nucleophile is D8. Mg(2+)-binding residues include D8 and D10. The Proton donor role is filled by D10. Substrate-binding residues include D19 and D99. D179 is a Mg(2+) binding site.

It belongs to the HAD-like hydrolase superfamily. PHOSPHO family. Mg(2+) serves as cofactor.

The catalysed reaction is pyridoxal 5'-phosphate + H2O = pyridoxal + phosphate. Functionally, phosphatase that has high activity toward pyridoxal 5'-phosphate (PLP). Also active at much lower level toward pyrophosphate, phosphoethanolamine (PEA), phosphocholine (PCho), phospho-l-tyrosine, fructose-6-phosphate, p-nitrophenyl phosphate, and h-glycerophosphate. This chain is Pyridoxal phosphate phosphatase PHOSPHO2 (PHOSPHO2), found in Homo sapiens (Human).